The following is a 93-amino-acid chain: M-zodatoxin-Lt5a (93 aa).

The N-terminal stretch at 1–22 (MKYCVVILALLVALVCITESRS) is a signal peptide. The propeptide occupies 23 to 64 (TETGYAVAETLEDNDLDELQAYLEEIAEASEMEDFSNIEEAR). The Processing quadruplet motif signature appears at 61–64 (EEAR). L92 carries the leucine amide modification.

In terms of processing, cleavage of the propeptide depends on the processing quadruplet motif (XXXR, with at least one of X being E). Expressed by the venom gland.

The protein localises to the secreted. Functionally, has antimicrobial activity against. Gram-positive bacteria (A.globiformis VKM Ac-1112 (MIC=1.1 uM), and B.subtilis VKM B-501 (MIC=0.6 uM)), Gram-negative bacteria (E.coli DH5-alpha (MIC=0.6 uM), E.coli MH1 (MIC=0.6 uM), and P.aeruginosa PAO1 (MIC=18 uM)), and yeasts (P.pastoris GS115 (MIC&gt;37 uM), and S.cerevisiae Y190 (MIC&gt;37 uM)). Also has a moderate hemolytic activity against rabbit erythrocytes. Causes paralysis, but is not lethal when injected into insect (M.domestica) larvae. The polypeptide is M-zodatoxin-Lt5a (Lachesana tarabaevi (Spider)).